Consider the following 370-residue polypeptide: Protein-glutamate methylesterase/protein-glutamine glutaminase of group 1 operon (370 aa).

The 118-residue stretch at 4 to 121 folds into the Response regulatory domain; the sequence is KVLVVDDSGF…SRNPDKVKQL (118 aa). A 4-aspartylphosphate modification is found at D55. The span at 150-180 shows a compositional bias: low complexity; sequence PASTFTSQAQTRPAAPARAAAPTPAASQSPA. The interval 150–183 is disordered; that stretch reads PASTFTSQAQTRPAAPARAAAPTPAASQSPAPKR. Positions 179–370 constitute a CheB-type methylesterase domain; it reads PAPKRKPYKL…IGKHLVEACV (192 aa). Active-site residues include S194, H221, and D314.

The protein belongs to the CheB family. In terms of processing, phosphorylated by CheA. Phosphorylation of the N-terminal regulatory domain activates the methylesterase activity.

Its subcellular location is the cytoplasm. It carries out the reaction [protein]-L-glutamate 5-O-methyl ester + H2O = L-glutamyl-[protein] + methanol + H(+). The enzyme catalyses L-glutaminyl-[protein] + H2O = L-glutamyl-[protein] + NH4(+). Functionally, involved in chemotaxis. Part of a chemotaxis signal transduction system that modulates chemotaxis in response to various stimuli. Catalyzes the demethylation of specific methylglutamate residues introduced into the chemoreceptors (methyl-accepting chemotaxis proteins or MCP) by CheR. Also mediates the irreversible deamidation of specific glutamine residues to glutamic acid. In Pseudomonas putida (strain ATCC 47054 / DSM 6125 / CFBP 8728 / NCIMB 11950 / KT2440), this protein is Protein-glutamate methylesterase/protein-glutamine glutaminase of group 1 operon.